The chain runs to 813 residues: Calpain-7 (813 aa).

Residue Met1 is modified to N-acetylmethionine. Thr95 is subject to Phosphothreonine. Residues 232-540 (RERFAYPMPF…YDVIYLSWNP (309 aa)) form the Calpain catalytic domain. Residues Cys290, His458, and Asn478 contribute to the active site. The tract at residues 541–701 (GLFKESTCIH…INGKWSGQSA (161 aa)) is domain III. The domain N stretch occupies residues 702–813 (GGCGNFQETH…IIPIKITQLQ (112 aa)).

The protein belongs to the peptidase C2 family. In terms of tissue distribution, ubiquitous.

The protein localises to the nucleus. Its function is as follows. Calcium-regulated non-lysosomal thiol-protease. The sequence is that of Calpain-7 (CAPN7) from Homo sapiens (Human).